The following is a 367-amino-acid chain: Protein RecA (367 aa).

Gly73–Thr80 contributes to the ATP binding site.

It belongs to the RecA family.

It is found in the cytoplasm. In terms of biological role, can catalyze the hydrolysis of ATP in the presence of single-stranded DNA, the ATP-dependent uptake of single-stranded DNA by duplex DNA, and the ATP-dependent hybridization of homologous single-stranded DNAs. It interacts with LexA causing its activation and leading to its autocatalytic cleavage. The polypeptide is Protein RecA (Delftia acidovorans (strain DSM 14801 / SPH-1)).